Consider the following 206-residue polypeptide: UPF0301 protein Msil_1255 (206 aa).

This sequence belongs to the UPF0301 (AlgH) family.

In Methylocella silvestris (strain DSM 15510 / CIP 108128 / LMG 27833 / NCIMB 13906 / BL2), this protein is UPF0301 protein Msil_1255.